We begin with the raw amino-acid sequence, 265 residues long: Apolipoprotein A-I (265 aa).

Positions 1–18 are cleaved as a signal peptide; it reads MKAVVLTLAVLFLTGSQA. Repeat copies occupy residues 67–88 and 89–110. A 10 X approximate tandem repeats region spans residues 67 to 265; the sequence is LKLLDNWDSL…DEASKKLNAQ (199 aa). Methionine 109 carries the post-translational modification Methionine sulfoxide. The stretch at 111-121 is one 3; half-length repeat; sequence KDLEEVKKKVQ. 5 repeat units span residues 122–142, 144–165, 166–187, 188–209, and 210–230. Methionine 135 is modified (methionine sulfoxide). One copy of the 9; half-length repeat lies at 231–241; the sequence is PALEDLRQGLL. Copy 10 of the repeat occupies 242 to 265; the sequence is PVLENLKVSILAAIDEASKKLNAQ.

The protein belongs to the apolipoprotein A1/A4/E family. In terms of assembly, homodimer. Interacts with APOA1BP and CLU. Component of a sperm activating protein complex (SPAP), consisting of APOA1, an immunoglobulin heavy chain, an immunoglobulin light chain and albumin. Interacts with NDRG1. Interacts with SCGB3A2. Interacts with NAXE and YJEFN3. Post-translationally, glycosylated. Palmitoylated. In terms of processing, phosphorylation sites are present in the extracellular medium. In terms of tissue distribution, major protein of plasma HDL, also found in chylomicrons. Synthesized predominantly in the intestine and the liver.

The protein resides in the secreted. Participates in the reverse transport of cholesterol from tissues to the liver for excretion by promoting cholesterol efflux from tissues and by acting as a cofactor for the lecithin cholesterol acyltransferase (LCAT). As part of the SPAP complex, activates spermatozoa motility. The polypeptide is Apolipoprotein A-I (APOA1) (Sus scrofa (Pig)).